The chain runs to 340 residues: Lipase chaperone (340 aa).

The chain crosses the membrane as a helical span at residues 4 to 24 (ILLLIPLAFAASLAWFVWLEP). The disordered stretch occupies residues 29 to 51 (ETAPPASPQAGADRAPPAASAGE). Positions 36–51 (PQAGADRAPPAASAGE) are enriched in low complexity.

The protein belongs to the lipase chaperone family.

Its subcellular location is the cell inner membrane. In terms of biological role, may be involved in the folding of the extracellular lipase during its passage through the periplasm. This is Lipase chaperone (lifO) from Pseudomonas aeruginosa (strain ATCC 15692 / DSM 22644 / CIP 104116 / JCM 14847 / LMG 12228 / 1C / PRS 101 / PAO1).